A 375-amino-acid chain; its full sequence is 23S rRNA (uracil(747)-C(5))-methyltransferase RlmC (375 aa).

Residues C3, C11, C14, and C87 each contribute to the [4Fe-4S] cluster site. 4 residues coordinate S-adenosyl-L-methionine: Q212, F241, E262, and N307. Catalysis depends on C334, which acts as the Nucleophile.

The protein belongs to the class I-like SAM-binding methyltransferase superfamily. RNA M5U methyltransferase family. RlmC subfamily.

It catalyses the reaction uridine(747) in 23S rRNA + S-adenosyl-L-methionine = 5-methyluridine(747) in 23S rRNA + S-adenosyl-L-homocysteine + H(+). Its function is as follows. Catalyzes the formation of 5-methyl-uridine at position 747 (m5U747) in 23S rRNA. This chain is 23S rRNA (uracil(747)-C(5))-methyltransferase RlmC, found in Salmonella typhi.